Reading from the N-terminus, the 615-residue chain is Semenogelin-1 (615 aa).

The signal sequence occupies residues 1 to 23 (MKPIIFLVLSLLLILEKQAAVMG). Glutamine 24 carries the pyrrolidone carboxylic acid modification. 3 disordered regions span residues 24–118 (QKGG…EHGK), 133–160 (GHAPHGTQNPSQDQGNSTSGKGISSQDS), and 172–585 (GKEQ…HRSY). Polar residues predominate over residues 34-46 (SESSQFPHGQKGQ). The segment covering 50-80 (ARKDKQHAESKRSVSIEHTYHVDIPDHDQTR) has biased composition (basic and acidic residues). The segment covering 81–91 (TSKQYDLNAQN) has biased composition (polar residues). Basic and acidic residues predominate over residues 107–118 (FNHKQEGREHGK). Composition is skewed to polar residues over residues 138–160 (GTQNPSQDQGNSTSGKGISSQDS), 177–196 (SVSGTQRNGTQGGSQSSPVL), and 209–224 (TQNSLQNKGSSPNVNE). N-linked (GlcNAc...) asparagine glycosylation is found at asparagine 148, asparagine 184, and asparagine 223. A compositionally biased stretch (basic and acidic residues) spans 241–253 (QEDRLQHGSKDVF). A compositionally biased stretch (polar residues) spans 254 to 265 (SKNQNQTRNPNQ). Residues asparagine 258 and asparagine 275 are each glycosylated (N-linked (GlcNAc...) asparagine). Residues 283–300 (TEERRPNHGEKGIQKDAS) show a composition bias toward basic and acidic residues. Asparagine 306 is a glycosylation site (N-linked (GlcNAc...) asparagine). A compositionally biased stretch (basic and acidic residues) spans 308-317 (TEDKMHDKSQ). A glycan (N-linked (GlcNAc...) asparagine) is linked at asparagine 332. The segment covering 341–358 (TEERRPNHGEKGIQKDAS) has biased composition (basic and acidic residues). An N-linked (GlcNAc...) asparagine glycan is attached at asparagine 364. Residues 366–375 (TEDKMHDKSQ) show a composition bias toward basic and acidic residues. N-linked (GlcNAc...) asparagine glycosylation is present at asparagine 390. Residues 399–416 (TEERRPNHGEKGIQKDAS) show a composition bias toward basic and acidic residues. Residue asparagine 422 is glycosylated (N-linked (GlcNAc...) asparagine). The segment covering 424–433 (TEDKMHDKSQ) has biased composition (basic and acidic residues). Residue asparagine 448 is glycosylated (N-linked (GlcNAc...) asparagine). Over residues 457–474 (TEERRPNHGEKGIQKDAS) the composition is skewed to basic and acidic residues. The N-linked (GlcNAc...) asparagine glycan is linked to asparagine 480. The segment covering 481–491 (KTEDKMHDKSQ) has biased composition (basic and acidic residues). Asparagine 506 carries N-linked (GlcNAc...) asparagine glycosylation. The segment covering 515 to 532 (TEERRPNHGEKGIQKDAS) has biased composition (basic and acidic residues). N-linked (GlcNAc...) asparagine glycosylation is present at asparagine 538. Residues 539–549 (KTEDEKHDKSQ) are compositionally biased toward basic and acidic residues. Polar residues predominate over residues 550-563 (KQVTTPSQDQQSGQ).

This sequence belongs to the semenogelin family. Occurs in disulfide-linked complexes. Post-translationally, transglutaminase substrate. In terms of processing, rapidly cleaved after ejaculation by KLK3/PSA, resulting in liquefaction of the semen coagulum and the progressive release of motile spermatozoa.

The protein localises to the secreted. Its function is as follows. Predominant protein in semen. It participates in the formation of a gel matrix entrapping the accessory gland secretions and ejaculated spermatozoa. Fragments of semenogelin and/or fragments of the related proteins may contribute to the activation of progressive sperm movements as the gel-forming proteins are fragmented by KLK3/PSA. The protein is Semenogelin-1 (SEMG1) of Saguinus oedipus (Cotton-top tamarin).